The following is a 383-amino-acid chain: Protein delta homolog 2 (383 aa).

A signal peptide spans 1–26 (MPSGCRCLHLVCLLCILGAPGQPVRA). 4 consecutive EGF-like domains span residues 27 to 58 (DDCS…LHCE), 62 to 89 (RMPG…KFCD), 91 to 129 (DEHI…RDCE), and 131 to 172 (KAGP…ARCE). The Extracellular portion of the chain corresponds to 27 to 306 (DDCSSHCDLA…RQEAGLGEPS (280 aa)). Intrachain disulfides connect cysteine 29–cysteine 40, cysteine 33–cysteine 46, cysteine 48–cysteine 57, cysteine 66–cysteine 71, cysteine 79–cysteine 88, cysteine 95–cysteine 107, cysteine 101–cysteine 117, cysteine 119–cysteine 128, cysteine 135–cysteine 148, cysteine 142–cysteine 160, cysteine 162–cysteine 171, cysteine 178–cysteine 189, cysteine 183–cysteine 198, cysteine 200–cysteine 209, cysteine 216–cysteine 227, cysteine 221–cysteine 236, and cysteine 238–cysteine 247. Asparagine 157 carries N-linked (GlcNAc...) asparagine glycosylation. An EGF-like 5; calcium-binding domain is found at 174–210 (NVDDCLMRPCANGATCLDGINRFSCLCPEGFAGRFCT). The EGF-like 6; calcium-binding domain occupies 212–248 (NLDDCASRPCQRGARCRDRVHDFDCLCPSGYGGKTCE). Residues 307–327 (LVALVVFGALTAALVLATVLL) form a helical membrane-spanning segment. Topologically, residues 328-383 (TLRAWRRGVCPPGPCCYPAPHYAPACQDQECQVSMLPAGLPLPRDLPPEPGKTTAL) are cytoplasmic.

The protein localises to the membrane. Regulates adipogenesis. The protein is Protein delta homolog 2 (DLK2) of Homo sapiens (Human).